Reading from the N-terminus, the 176-residue chain is Outer membrane protein assembly factor BamE (176 aa).

A signal peptide spans 1–21 (MQNAKLMLTCLAFAGLAALAG). Residue C22 is the site of N-palmitoyl cysteine attachment. C22 is lipidated: S-diacylglycerol cysteine. The segment at 121-176 (KEGSTTVTQPADQQKPEAQKEEPPKPGSTLEQLQREVDEAQPVPVPTPEPLDPSPQ) is disordered. Over residues 123 to 132 (GSTTVTQPAD) the composition is skewed to polar residues. Positions 134–144 (QKPEAQKEEPP) are enriched in basic and acidic residues. Over residues 163-176 (VPVPTPEPLDPSPQ) the composition is skewed to pro residues.

It belongs to the BamE family. In terms of assembly, part of the Bam complex.

It localises to the cell outer membrane. Functionally, part of the outer membrane protein assembly complex, which is involved in assembly and insertion of beta-barrel proteins into the outer membrane. May have a structural role in maintaining the cell envelope integrity. The sequence is that of Outer membrane protein assembly factor BamE from Pseudomonas aeruginosa (strain ATCC 15692 / DSM 22644 / CIP 104116 / JCM 14847 / LMG 12228 / 1C / PRS 101 / PAO1).